Consider the following 89-residue polypeptide: Bacterial microcompartment shell vertex protein GrpN (89 aa).

Residues 1–83 enclose the BMV domain; sequence MYLGKVIGTV…IDAAVVGIVD (83 aa).

It belongs to the CcmL/EutN family. Homopentamer with a small central pore.

Its subcellular location is the bacterial microcompartment. In terms of biological role, probably forms vertices in the bacterial microcompartment (BMC) predicted to be involved in glycyl radical-based 1,2-propanediol metabolism in this organism. The sequence is that of Bacterial microcompartment shell vertex protein GrpN from Rhodospirillum rubrum (strain F11).